Reading from the N-terminus, the 476-residue chain is Ribulose bisphosphate carboxylase large chain (476 aa).

Positions 1–2 (MS) are excised as a propeptide. Pro-3 is modified (N-acetylproline). Lys-14 carries the N6,N6,N6-trimethyllysine modification. Residues Asn-123 and Thr-173 each coordinate substrate. The active-site Proton acceptor is Lys-175. A substrate-binding site is contributed by Lys-177. Lys-201, Asp-203, and Glu-204 together coordinate Mg(2+). Lys-201 is modified (N6-carboxylysine). His-294 acts as the Proton acceptor in catalysis. The substrate site is built by Arg-295, His-327, and Ser-379.

Belongs to the RuBisCO large chain family. Type I subfamily. Heterohexadecamer of 8 large chains and 8 small chains; disulfide-linked. The disulfide link is formed within the large subunit homodimers. The cofactor is Mg(2+). In terms of processing, the disulfide bond which can form in the large chain dimeric partners within the hexadecamer appears to be associated with oxidative stress and protein turnover.

The protein localises to the plastid. The protein resides in the chloroplast. The enzyme catalyses 2 (2R)-3-phosphoglycerate + 2 H(+) = D-ribulose 1,5-bisphosphate + CO2 + H2O. It catalyses the reaction D-ribulose 1,5-bisphosphate + O2 = 2-phosphoglycolate + (2R)-3-phosphoglycerate + 2 H(+). In terms of biological role, ruBisCO catalyzes two reactions: the carboxylation of D-ribulose 1,5-bisphosphate, the primary event in carbon dioxide fixation, as well as the oxidative fragmentation of the pentose substrate in the photorespiration process. Both reactions occur simultaneously and in competition at the same active site. This Sorghum bicolor (Sorghum) protein is Ribulose bisphosphate carboxylase large chain.